The primary structure comprises 393 residues: S-adenosylmethionine synthase 2 (393 aa).

E9 serves as a coordination point for Mg(2+). H15 contacts ATP. Residue E43 participates in K(+) binding. L-methionine contacts are provided by E56 and Q99. Residues 167-169 (DGK), 235-238 (SGRF), D246, 252-253 (RK), A269, K273, and K277 contribute to the ATP site. An L-methionine-binding site is contributed by D246. K277 provides a ligand contact to L-methionine.

The protein belongs to the AdoMet synthase family. Homotetramer. It depends on Mn(2+) as a cofactor. The cofactor is Mg(2+). Co(2+) serves as cofactor. K(+) is required as a cofactor. Mostly expressed in flowers, seedpods and roots, and, to a lower extent, in stems and leaves.

The protein localises to the cytoplasm. The catalysed reaction is L-methionine + ATP + H2O = S-adenosyl-L-methionine + phosphate + diphosphate. It participates in amino-acid biosynthesis; S-adenosyl-L-methionine biosynthesis; S-adenosyl-L-methionine from L-methionine: step 1/1. Its function is as follows. Catalyzes the formation of S-adenosylmethionine from methionine and ATP. The reaction comprises two steps that are both catalyzed by the same enzyme: formation of S-adenosylmethionine (AdoMet) and triphosphate, and subsequent hydrolysis of the triphosphate. The sequence is that of S-adenosylmethionine synthase 2 (MSAMS2) from Brassica juncea (Indian mustard).